A 199-amino-acid polypeptide reads, in one-letter code: Translation initiation factor IF-3 (199 aa).

This sequence belongs to the IF-3 family. Monomer.

It localises to the cytoplasm. Functionally, IF-3 binds to the 30S ribosomal subunit and shifts the equilibrium between 70S ribosomes and their 50S and 30S subunits in favor of the free subunits, thus enhancing the availability of 30S subunits on which protein synthesis initiation begins. The sequence is that of Translation initiation factor IF-3 from Mycoplasmopsis pulmonis (strain UAB CTIP) (Mycoplasma pulmonis).